Consider the following 188-residue polypeptide: dCTP deaminase (188 aa).

DCTP contacts are provided by residues 111–116 (KSTYAR), 135–137 (TLE), Gln156, Tyr170, and Gln180. The Proton donor/acceptor role is filled by Glu137.

The protein belongs to the dCTP deaminase family. As to quaternary structure, homotrimer.

It catalyses the reaction dCTP + H2O + H(+) = dUTP + NH4(+). It functions in the pathway pyrimidine metabolism; dUMP biosynthesis; dUMP from dCTP (dUTP route): step 1/2. Functionally, catalyzes the deamination of dCTP to dUTP. The protein is dCTP deaminase of Cupriavidus pinatubonensis (strain JMP 134 / LMG 1197) (Cupriavidus necator (strain JMP 134)).